The following is a 398-amino-acid chain: tRNA-specific 2-thiouridylase MnmA (398 aa).

Residues 33 to 40 (GMSGGVDS) and methionine 59 contribute to the ATP site. Positions 119–121 (NPD) are interaction with target base in tRNA. Cysteine 124 serves as the catalytic Nucleophile. A disulfide bridge connects residues cysteine 124 and cysteine 226. Glycine 148 contributes to the ATP binding site. The interaction with tRNA stretch occupies residues 176–178 (KDQ). Cysteine 226 acts as the Cysteine persulfide intermediate in catalysis. The segment at 343-344 (RY) is interaction with tRNA.

It belongs to the MnmA/TRMU family.

The protein localises to the cytoplasm. The enzyme catalyses S-sulfanyl-L-cysteinyl-[protein] + uridine(34) in tRNA + AH2 + ATP = 2-thiouridine(34) in tRNA + L-cysteinyl-[protein] + A + AMP + diphosphate + H(+). Functionally, catalyzes the 2-thiolation of uridine at the wobble position (U34) of tRNA, leading to the formation of s(2)U34. This chain is tRNA-specific 2-thiouridylase MnmA, found in Psychrobacter sp. (strain PRwf-1).